Here is a 530-residue protein sequence, read N- to C-terminus: Autoinducer-2 kinase (530 aa).

It belongs to the FGGY kinase family.

The protein resides in the cytoplasm. It catalyses the reaction (S)-4,5-dihydroxypentane-2,3-dione + ATP = (2S)-2-hydroxy-3,4-dioxopentyl phosphate + ADP + H(+). In terms of biological role, catalyzes the phosphorylation of autoinducer-2 (AI-2) to phospho-AI-2, which subsequently inactivates the transcriptional regulator LsrR and leads to the transcription of the lsr operon. Phosphorylates the ring-open form of (S)-4,5-dihydroxypentane-2,3-dione (DPD), which is the precursor to all AI-2 signaling molecules, at the C5 position. The chain is Autoinducer-2 kinase from Yersinia pestis bv. Antiqua (strain Angola).